The sequence spans 280 residues: 4-deoxy-L-threo-5-hexosulose-uronate ketol-isomerase (280 aa).

Residues H198, H200, E205, and H247 each coordinate Zn(2+).

This sequence belongs to the KduI family. The cofactor is Zn(2+).

The catalysed reaction is 5-dehydro-4-deoxy-D-glucuronate = 3-deoxy-D-glycero-2,5-hexodiulosonate. The protein operates within glycan metabolism; pectin degradation; 2-dehydro-3-deoxy-D-gluconate from pectin: step 4/5. Its function is as follows. Catalyzes the isomerization of 5-dehydro-4-deoxy-D-glucuronate to 3-deoxy-D-glycero-2,5-hexodiulosonate. This is 4-deoxy-L-threo-5-hexosulose-uronate ketol-isomerase from Bacteroides fragilis (strain ATCC 25285 / DSM 2151 / CCUG 4856 / JCM 11019 / LMG 10263 / NCTC 9343 / Onslow / VPI 2553 / EN-2).